Here is a 520-residue protein sequence, read N- to C-terminus: Legumin A2 (520 aa).

An N-terminal signal peptide occupies residues 1-22 (MATKLLALSLSFCFLLLGGCFA). Disulfide bonds link Cys32-Cys65 and Cys108-Cys342. Residues 37-233 (LNALEPDNRI…AFNVNRHIVD (197 aa)) form the Cupin type-1 1 domain. Positions 250–339 (VKGGLSIISP…RRQGDNGLEE (90 aa)) are disordered. One can recognise a Cupin type-1 2 domain in the interval 348 to 497 (LNIGPSSSPD…TFNLQRNEAR (150 aa)).

This sequence belongs to the 11S seed storage protein (globulins) family. In terms of assembly, hexamer; each subunit is composed of an acidic and a basic chain derived from a single precursor and linked by a disulfide bond.

In terms of biological role, this protein found in the seeds of many leguminous and non-leguminous plants is the source of sulfur-containing amino acids in seed meals. This is Legumin A2 (LEGA2) from Pisum sativum (Garden pea).